Here is a 220-residue protein sequence, read N- to C-terminus: Putative glutathione S-transferase C1183.02 (220 aa).

The GST N-terminal domain occupies 2-81; sequence FLGTLYSFKT…YFYEKGKHND (80 aa). A GST C-terminal domain is found at 89–216; that stretch reads NEVEEAEMLK…FPLELPLTVT (128 aa).

The protein belongs to the GST superfamily.

It localises to the cytoplasm. The catalysed reaction is RX + glutathione = an S-substituted glutathione + a halide anion + H(+). Its function is as follows. Involved in the oxidative stress response and detoxification. The protein is Putative glutathione S-transferase C1183.02 of Schizosaccharomyces pombe (strain 972 / ATCC 24843) (Fission yeast).